Here is a 418-residue protein sequence, read N- to C-terminus: Serine hydroxymethyltransferase (418 aa).

Residues L121 and 125 to 127 contribute to the (6S)-5,6,7,8-tetrahydrofolate site; that span reads GHL. N6-(pyridoxal phosphate)lysine is present on K230. Residue 356 to 358 coordinates (6S)-5,6,7,8-tetrahydrofolate; that stretch reads SPF.

Belongs to the SHMT family. Homodimer. Pyridoxal 5'-phosphate serves as cofactor.

Its subcellular location is the cytoplasm. It catalyses the reaction (6R)-5,10-methylene-5,6,7,8-tetrahydrofolate + glycine + H2O = (6S)-5,6,7,8-tetrahydrofolate + L-serine. It functions in the pathway one-carbon metabolism; tetrahydrofolate interconversion. Its pathway is amino-acid biosynthesis; glycine biosynthesis; glycine from L-serine: step 1/1. Its function is as follows. Catalyzes the reversible interconversion of serine and glycine with tetrahydrofolate (THF) serving as the one-carbon carrier. This reaction serves as the major source of one-carbon groups required for the biosynthesis of purines, thymidylate, methionine, and other important biomolecules. Also exhibits THF-independent aldolase activity toward beta-hydroxyamino acids, producing glycine and aldehydes, via a retro-aldol mechanism. This chain is Serine hydroxymethyltransferase, found in Pseudoalteromonas translucida (strain TAC 125).